Reading from the N-terminus, the 142-residue chain is MTKENRKRIIAVDYGTKRIGLAKTDPLQLFAQPVGTFSEEALFRAIKEISGLDGIGRILIGYPLNADGSHNRMTDIVDAFAARVHNEFPDIPLELVNEHGSSRSAGQILINSGLSRKKRHEKGRLDSASACVLLQAHLDKSH.

This sequence belongs to the YqgF nuclease family.

It is found in the cytoplasm. In terms of biological role, could be a nuclease involved in processing of the 5'-end of pre-16S rRNA. The chain is Putative pre-16S rRNA nuclease from Prosthecochloris aestuarii (strain DSM 271 / SK 413).